The following is a 272-amino-acid chain: 3-methyl-2-oxobutanoate hydroxymethyltransferase (272 aa).

Asp-43 and Asp-82 together coordinate Mg(2+). 3-methyl-2-oxobutanoate is bound by residues Asp-43–Ser-44, Asp-82, and Lys-112. Glu-114 provides a ligand contact to Mg(2+). Glu-179 acts as the Proton acceptor in catalysis.

This sequence belongs to the PanB family. In terms of assembly, homodecamer; pentamer of dimers. Requires Mg(2+) as cofactor.

It is found in the cytoplasm. It catalyses the reaction 3-methyl-2-oxobutanoate + (6R)-5,10-methylene-5,6,7,8-tetrahydrofolate + H2O = 2-dehydropantoate + (6S)-5,6,7,8-tetrahydrofolate. Its pathway is cofactor biosynthesis; (R)-pantothenate biosynthesis; (R)-pantoate from 3-methyl-2-oxobutanoate: step 1/2. Catalyzes the reversible reaction in which hydroxymethyl group from 5,10-methylenetetrahydrofolate is transferred onto alpha-ketoisovalerate to form ketopantoate. This Staphylococcus aureus (strain bovine RF122 / ET3-1) protein is 3-methyl-2-oxobutanoate hydroxymethyltransferase.